The primary structure comprises 134 residues: Probable 4-amino-4-deoxy-L-arabinose-phosphoundecaprenol flippase subunit ArnF (134 aa).

Over 1 to 5 (MNRRR) the chain is Cytoplasmic. Residues 6 to 26 (GILFALASVLLVSVAQLSMRW) traverse the membrane as a helical segment. The Periplasmic portion of the chain corresponds to 27 to 45 (SMTRLPRPDQWLSVPSVDS). Residues 46 to 66 (VALAVVLAAIFAYALSMLCWL) traverse the membrane as a helical segment. Topologically, residues 67–77 (AALRDLPLGRA) are cytoplasmic. The helical transmembrane segment at 78-98 (YSLLSISYALVYLLAASLPLF) threads the bilayer. Residues 99 to 101 (NES) lie on the Periplasmic side of the membrane. Residues 102-122 (FSFSKSLGVALVMLGVITINT) traverse the membrane as a helical segment. Over 123-134 (RPARAPELRSSP) the chain is Cytoplasmic.

The protein belongs to the ArnF family. Heterodimer of ArnE and ArnF.

The protein resides in the cell inner membrane. The protein operates within bacterial outer membrane biogenesis; lipopolysaccharide biosynthesis. Its function is as follows. Translocates 4-amino-4-deoxy-L-arabinose-phosphoundecaprenol (alpha-L-Ara4N-phosphoundecaprenol) from the cytoplasmic to the periplasmic side of the inner membrane. This Pseudomonas fluorescens (strain Pf0-1) protein is Probable 4-amino-4-deoxy-L-arabinose-phosphoundecaprenol flippase subunit ArnF.